A 302-amino-acid polypeptide reads, in one-letter code: MDGILPLYKERGMTSNDAVIKCRKIFKTRKIGHSGTLDPEVDGVLPICVGKATKVVNYLMDSGKVYKGEITLGFATTTEDLEGEVISKVKLSEPFSDEKINEILSSFIGDIIQVPPIYSAIKVNGKKLYEYARAGEKVDIPERRVHIEYFKQIFPSKFDKEKGQQTIYFEVGCGKGTYVRTLAVDVGKKLGVPAVMSDLTRLKSGGFQIGMAKSLSQLEKLAHENKLSESLYPIDYAVKDLPRYDLKLEQWRIVKNGGFLSVNTFKEDYDRVNLFYDDRIRCIYQYNKEKNRYQSERMIDLS.

Residue Asp-38 is the Nucleophile of the active site.

The protein belongs to the pseudouridine synthase TruB family. Type 1 subfamily.

The enzyme catalyses uridine(55) in tRNA = pseudouridine(55) in tRNA. Its function is as follows. Responsible for synthesis of pseudouridine from uracil-55 in the psi GC loop of transfer RNAs. This Ligilactobacillus salivarius (strain UCC118) (Lactobacillus salivarius) protein is tRNA pseudouridine synthase B.